Consider the following 107-residue polypeptide: Theromyzin (107 aa).

An N-terminal signal peptide occupies residues 1–21; sequence MHAKIILALFLGMTAFLAVQA.

As to expression, coelomic liquid (at protein level). Expressed in large fat cells in contact with coelomic cavities, in intestinal epithelia and at the epidermis level.

Its subcellular location is the secreted. In terms of biological role, has bacteriostatic activity against M.luteus. No activity toward E.coli and F.oxysporum. The chain is Theromyzin from Theromyzon tessulatum (Duck leech).